Consider the following 64-residue polypeptide: MEHWGEPIPGTGQSWRQPLSTSGRGWLGSAPWRWLGPTSWRWLGSAPWWWLGTATWWWRLGSRW.

The tract at residues 1–22 (MEHWGEPIPGTGQSWRQPLSTS) is disordered. Residues 11-22 (TGQSWRQPLSTS) are compositionally biased toward polar residues. A helical transmembrane segment spans residues 40–58 (WRWLGSAPWWWLGTATWWW).

It localises to the mitochondrion outer membrane. The polypeptide is Alternative prion protein (Ovis aries (Sheep)).